A 697-amino-acid polypeptide reads, in one-letter code: Lebercilin (697 aa).

A disordered region spans residues 1–90 (MGERAGSPGT…VGFRSQSLNR (90 aa)). A phosphoserine mark is found at Ser7 and Ser45. A compositionally biased stretch (low complexity) spans 32 to 45 (SSGRSSLVSSSPAS). Coiled-coil stretches lie at residues 103-297 (RILS…IKNI) and 389-485 (EEKF…RNLK). Disordered regions lie at residues 412 to 432 (WEREELDKKQKEKASLLEREE), 522 to 548 (HHLQDISFSTPKGEGQNSGNVRSPASP), and 606 to 697 (EQLF…VALR). Basic and acidic residues predominate over residues 416 to 432 (ELDKKQKEKASLLEREE). The span at 527-547 (ISFSTPKGEGQNSGNVRSPAS) shows a compositional bias: polar residues. Over residues 612–626 (SGSSTISSKSSDPNS) the composition is skewed to low complexity. The span at 686-697 (SVEDEIEEVALR) shows a compositional bias: acidic residues.

It belongs to the LCA5 family. Interacts with NINL. Interacts with OFD1. Interacts with FAM161A. Interacts with components of the IFT complex B. As to expression, widely expressed.

The protein resides in the cytoplasm. The protein localises to the cytoskeleton. Its subcellular location is the cilium axoneme. It localises to the cilium basal body. It is found in the microtubule organizing center. The protein resides in the centrosome. The protein localises to the cell projection. Its subcellular location is the cilium. Involved in intraflagellar protein (IFT) transport in photoreceptor cilia. The polypeptide is Lebercilin (LCA5) (Homo sapiens (Human)).